The primary structure comprises 253 residues: Porin thermoregulatory protein EnvY (253 aa).

Residues 149–246 (DSVCRIIQSD…GLTPLNYLAK (98 aa)) enclose the HTH araC/xylS-type domain. 2 DNA-binding regions (H-T-H motif) span residues 166 to 187 (RIVASSLCLSPSLLKKKLKNEN) and 213 to 236 (ITQVAQLCGYSSTSYFISVFKAFY).

Its function is as follows. Influences the temperature-dependent expression of several E.coli envelope proteins, most notably the porins OmpF and OmpC and the lambda receptor, LamB. In Escherichia coli (strain K12), this protein is Porin thermoregulatory protein EnvY (envY).